Consider the following 361-residue polypeptide: Solute carrier family 25 member 3 (361 aa).

The N-terminal 49 residues, 1–49 (MFSSVAHLARANPFNTPHLQLVHDGLGDFRSRPPGPTGQPRRPRNLAAA), are a transit peptide targeting the mitochondrion. The disordered stretch occupies residues 25-44 (GLGDFRSRPPGPTGQPRRPR). Over 50 to 62 (AVEEYSCEFGSAK) the chain is Mitochondrial intermembrane. Solcar repeat units lie at residues 62–146 (KYYA…FKVL), 159–243 (WRTS…TVEA), and 260–338 (EQLV…VKVY). Residues 63 to 85 (YYALCGFGGVLSCGLTHTAVVPL) form a helical membrane-spanning segment. Topologically, residues 86–120 (DLVKCRMQVDPQKYKGIFNGFSVTLKEDGVRGLAK) are mitochondrial matrix. Lys-98 carries the post-translational modification N6-acetyllysine. Lys-111 carries the N6-methyllysine modification. Residues 121–140 (GWAPTFLGYSMQGLCKFGFY) form a helical membrane-spanning segment. At 141–160 (EVFKVLYSNMLGEENTYLWR) the chain is on the mitochondrial intermembrane side. A helical transmembrane segment spans residues 161 to 182 (TSLYLAASASAEFFADIALAPM). Over 183–217 (EAAKVRIQTQPGYANTLRDAAPKMYKEEGLKAFYK) the chain is Mitochondrial matrix. Tyr-195 is modified (phosphotyrosine). N6-acetyllysine is present on Lys-208. A helical transmembrane segment spans residues 218–237 (GVAPLWMRQIPYTMMKFACF). Residues 238–260 (ERTVEALYKFVVPKPRSECSKPE) lie on the Mitochondrial intermembrane side of the membrane. Residues 261–283 (QLVVTFVAGYIAGVFCAIVSHPA) traverse the membrane as a helical segment. Residues 284-313 (DSVVSVLNKEKGSSASLVLKRLGFKGVWKG) lie on the Mitochondrial matrix side of the membrane. A helical transmembrane segment spans residues 314-332 (LFARIIMIGTLTALQWFIY). Topologically, residues 333–361 (DSVKVYFRLPRPPPPEMPESLKKKLGLTQ) are mitochondrial intermembrane.

This sequence belongs to the mitochondrial carrier (TC 2.A.29) family. Interacts with PPIF; the interaction is impaired by CsA.

Its subcellular location is the mitochondrion inner membrane. It carries out the reaction phosphate(in) + H(+)(in) = phosphate(out) + H(+)(out). Its function is as follows. Inorganic ion transporter that transports phosphate or copper ions across the mitochondrial inner membrane into the matrix compartment. Mediates proton-coupled symport of phosphate ions necessary for mitochondrial oxidative phosphorylation of ADP to ATP. Transports copper ions probably in the form of anionic copper(I) complexes to maintain mitochondrial matrix copper pool and to supply copper for cytochrome C oxidase complex assembly. May also play a role in regulation of the mitochondrial permeability transition pore (mPTP). The chain is Solute carrier family 25 member 3 from Pongo abelii (Sumatran orangutan).